A 397-amino-acid chain; its full sequence is Mediator of RNA polymerase II transcription subunit 3 (397 aa).

An N-acetylmethionine modification is found at methionine 1. Over residues 147–165 (ASTPTTTATPHANPITHAH) the composition is skewed to low complexity. Disordered regions lie at residues 147–227 (ASTP…AQAQ), 288–327 (SMGA…QSQL), and 346–370 (FQQQ…MGMN). Polar residues-rich tracts occupy residues 166–178 (SLSN…TMQH) and 189–202 (SGST…HNST). The segment covering 211 to 223 (KKPRKPRQTKKAK) has biased composition (basic residues). Over residues 290 to 303 (GAQNQGGQVSMSQF) the composition is skewed to polar residues. The segment covering 309–322 (GSNPNTNTNSNNTP) has biased composition (low complexity).

The protein belongs to the mediator complex subunit 3 family. Component of the Mediator complex, which is composed of at least 21 subunits that form three structurally distinct submodules. The Mediator head module contains MED6, MED8, MED11, SRB4/MED17, SRB5/MED18, ROX3/MED19, SRB2/MED20 and SRB6/MED22, the middle module contains MED1, MED4, NUT1/MED5, MED7, CSE2/MED9, NUT2/MED10, SRB7/MED21 and SOH1/MED31, and the tail module contains MED2, PGD1/MED3, RGR1/MED14, GAL11/MED15 and SIN4/MED16. The head and the middle modules interact directly with RNA polymerase II, whereas the elongated tail module interacts with gene-specific regulatory proteins. PGD1/MED3 interacts directly with the CYC8-TUP1 corepressor proteins.

It is found in the nucleus. Functionally, component of the Mediator complex, a coactivator involved in the regulated transcription of nearly all RNA polymerase II-dependent genes. Mediator functions as a bridge to convey information from gene-specific regulatory proteins to the basal RNA polymerase II transcription machinery. The Mediator complex, having a compact conformation in its free form, is recruited to promoters by direct interactions with regulatory proteins and serves for the assembly of a functional preinitiation complex with RNA polymerase II and the general transcription factors. The Mediator complex unfolds to an extended conformation and partially surrounds RNA polymerase II, specifically interacting with the unphosphorylated form of the C-terminal domain (CTD) of RNA polymerase II. The Mediator complex dissociates from the RNA polymerase II holoenzyme and stays at the promoter when transcriptional elongation begins. PGD1/MED3 is also involved in direct repeat recombination. This is Mediator of RNA polymerase II transcription subunit 3 (PGD1) from Saccharomyces cerevisiae (strain ATCC 204508 / S288c) (Baker's yeast).